The chain runs to 1706 residues: PR domain zinc finger protein 2 (1706 aa).

In terms of domain architecture, SET spans 27–140; it reads EEVRLFPSAV…PGEELLVWYN (114 aa). Residues 154-342 form a disordered region; that stretch reads ERASARSKRS…TPPPHTPRAR (189 aa). A compositionally biased stretch (basic residues) spans 158–183; it reads ARSKRSSPKSRRGKKKSHENKNKGIR. Residues 185-199 are compositionally biased toward polar residues; that stretch reads HPTQLKASELDSTFA. A compositionally biased stretch (acidic residues) spans 258–294; sequence TDCEVNDVEEEELEEEEELEEEEEEELGEDGVEEADM. Basic and acidic residues predominate over residues 299-313; that stretch reads SAKEPEIRCEEKPED. C2H2-type zinc fingers lie at residues 355–377 and 385–407; these read FPCQ…MHIH and FKCK…ERRH. 3 disordered regions span residues 400–446, 492–542, and 618–655; these read RRRH…QLGQ, RRHQ…EEEG, and LLKD…STAP. Ser416 bears the Phosphoserine mark. Positions 427-439 are enriched in basic and acidic residues; sequence DGKGENVTSKDES. A C2H2-type 3 zinc finger spans residues 476 to 499; it reads HPCKYCKKVFGTHTNMRRHQRRVH. Position 637 is a phosphoserine (Ser637). Residues Lys645, Lys684, and Lys686 each participate in a glycyl lysine isopeptide (Lys-Gly) (interchain with G-Cter in SUMO2) cross-link. Disordered regions lie at residues 724-794, 823-1075, and 1088-1112; these read TSSR…SPPC, SGVK…SSVV, and VTFK…AGGQ. Over residues 733–743 the composition is skewed to low complexity; it reads SSPPSSPQHSP. Ser738 bears the Phosphoserine mark. Lys769 participates in a covalent cross-link: Glycyl lysine isopeptide (Lys-Gly) (interchain with G-Cter in SUMO2). A phosphoserine mark is found at Ser776, Ser780, and Ser791. Polar residues predominate over residues 823-832; sequence SGVKQKSEGT. The segment covering 846-863 has biased composition (basic and acidic residues); the sequence is SVHKKPCDSEGKEFKENH. Glycyl lysine isopeptide (Lys-Gly) (interchain with G-Cter in SUMO2) cross-links involve residues Lys860 and Lys870. Composition is skewed to polar residues over residues 891–912 and 943–952; these read SLPT…SPDT and LQTASLSSGQ. The span at 962–983 shows a compositional bias: pro residues; that stretch reads PSSPPPCPPVLTVATPPPPLLP. A compositionally biased stretch (polar residues) spans 993-1009; that stretch reads DASPQQCPSPFSNTTAQ. The span at 1010-1019 shows a compositional bias: low complexity; that stretch reads SPLPILSPTV. Residues 1020–1030 show a composition bias toward pro residues; it reads SPSPSPIPPVE. A compositionally biased stretch (low complexity) spans 1034 to 1062; the sequence is SAASPGPPTLSSSSSSSSSFPSSSCSSTS. Positions 1091–1106 are enriched in basic and acidic residues; that stretch reads KQEESESEGLKPKEEA. 3 consecutive C2H2-type zinc fingers follow at residues 1123 to 1145, 1151 to 1174, and 1180 to 1203; these read FICN…LSVH, FKCE…FLLH, and FVCS…RDLH. Glycyl lysine isopeptide (Lys-Gly) (interchain with G-Cter in SUMO2) cross-links involve residues Lys1136 and Lys1140. The segment covering 1218–1227 has biased composition (polar residues); the sequence is LRPQNFTDPS. A disordered region spans residues 1218–1251; sequence LRPQNFTDPSKANVEHMPSLPEEPLETSREEELN. A Glycyl lysine isopeptide (Lys-Gly) (interchain with G-Cter in SUMO2) cross-link involves residue Lys1269. A C2H2-type 7; atypical zinc finger spans residues 1321 to 1343; that stretch reads IRCTKCGKGVDNMPELHKHILAC. The C2H2-type 8; atypical zinc finger occupies 1443-1465; that stretch reads HICPYCDREFTYIGSLNKHAAFS. Positions 1466–1563 are disordered; the sequence is CPKKPLSPSK…KKASSSSLRN (98 aa). Basic residues predominate over residues 1474–1486; the sequence is SKRKVSHSSKKGG. Over residues 1487–1498 the composition is skewed to low complexity; that stretch reads HASSSSSDRNSS. The segment covering 1528–1544 has biased composition (polar residues); it reads GPAQASLPSSSFRSRQN. The segment covering 1548–1563 has biased composition (low complexity); sequence AASVKSKKASSSSLRN.

It belongs to the class V-like SAM-binding methyltransferase superfamily. Binds to the retinoblastoma protein (RB). Interacts with GATA3.

It localises to the nucleus. It catalyses the reaction L-lysyl-[histone] + S-adenosyl-L-methionine = N(6)-methyl-L-lysyl-[histone] + S-adenosyl-L-homocysteine + H(+). The enzyme catalyses L-lysyl(9)-[histone H3] + 3 S-adenosyl-L-methionine = N(6),N(6),N(6)-trimethyl-L-lysyl(9)-[histone H3] + 3 S-adenosyl-L-homocysteine + 3 H(+). S-adenosyl-L-methionine-dependent histone methyltransferase that specifically methylates 'Lys-9' of histone H3. May function as a DNA-binding transcription factor. Binds to the macrophage-specific TPA-responsive element (MTE) of the HMOX1 (heme oxygenase 1) gene and may act as a transcriptional activator of this gene. In Rattus norvegicus (Rat), this protein is PR domain zinc finger protein 2 (Prdm2).